A 637-amino-acid polypeptide reads, in one-letter code: Anthranilate synthase, phenazine specific (637 aa).

The anthranilate synthase component I stretch occupies residues 1–434 (MSQAAARLME…QRQQTQSDFS (434 aa)). In terms of domain architecture, Glutamine amidotransferase type-1 spans 437 to 628 (QVLIVDAEDT…LRHALIHTPV (192 aa)). Active-site for GATase activity residues include Cys-517, His-602, and Glu-604.

The catalysed reaction is chorismate + L-glutamine = anthranilate + pyruvate + L-glutamate + H(+). It participates in antibiotic biosynthesis; phenazine biosynthesis. In terms of biological role, involved in the biosynthesis of the antibiotic, phenazine, a nitrogen-containing heterocyclic molecule having important roles in virulence, competition and biological control. This Pseudomonas fluorescens protein is Anthranilate synthase, phenazine specific (phzE).